A 301-amino-acid chain; its full sequence is Homoserine O-acetyltransferase (301 aa).

Cys-142 (acyl-thioester intermediate) is an active-site residue. Substrate is bound by residues Lys-163 and Ser-192. His-235 acts as the Proton acceptor in catalysis. The active site involves Glu-237. Arg-249 lines the substrate pocket.

This sequence belongs to the MetA family.

The protein resides in the cytoplasm. It catalyses the reaction L-homoserine + acetyl-CoA = O-acetyl-L-homoserine + CoA. The protein operates within amino-acid biosynthesis; L-methionine biosynthesis via de novo pathway; O-acetyl-L-homoserine from L-homoserine: step 1/1. In terms of biological role, transfers an acetyl group from acetyl-CoA to L-homoserine, forming acetyl-L-homoserine. The protein is Homoserine O-acetyltransferase of Novosphingobium aromaticivorans (strain ATCC 700278 / DSM 12444 / CCUG 56034 / CIP 105152 / NBRC 16084 / F199).